Here is a 327-residue protein sequence, read N- to C-terminus: MHSKVIIIGSGPAGHTAAIYLARAELKPVLYEGMLANGIAAGGQLTTTTDVENYPGFPDGIMGPLLMEKFREQSVKYGTCIITETVSKLDLSKRPFKYWCESDENTCHTADVVVMATGAYARRLHIPGEETYWQRGISACAVCDGAAPIFRGKCLSVVGGGDSAAEESLFLTRYATKVYLLVRRDKLRASAVMAKRLLNHPKIEVIWNTVVLRSLGDGHLLNRLEIKNVKTQVVSELHVSGLFYAIGHEPATALVRGQVECDDNGYIITKNGGPETNIKGFFAAGDVQDKKWRQAVTSAGSGCMAGLAAERLLAEEEEMKNIEKNKK.

FAD contacts are provided by residues 10 to 13 (SGPA), 39 to 40 (IA), Q44, N53, V86, C143, D286, and 293 to 295 (RQA). C140 and C143 are joined by a disulfide.

This sequence belongs to the class-II pyridine nucleotide-disulfide oxidoreductase family. In terms of assembly, homodimer. It depends on FAD as a cofactor.

It is found in the cytoplasm. It catalyses the reaction [thioredoxin]-dithiol + NADP(+) = [thioredoxin]-disulfide + NADPH + H(+). In terms of biological role, component of the thioredoxin-thioredoxin reductase system which may be involved in biosynthesis of penicillins and cephalosporins and may be important in determining the thiol-disulfide redox balance. The sequence is that of Thioredoxin reductase (TRR1) from Pneumocystis jirovecii (Human pneumocystis pneumonia agent).